Here is a 537-residue protein sequence, read N- to C-terminus: Lysine--tRNA ligase (537 aa).

A 'HIGH' region motif is present at residues 30-38; it reads PSGNIHIGN. A 'KMSKS' region motif is present at residues 276–280; the sequence is AMSSS.

Belongs to the class-I aminoacyl-tRNA synthetase family.

It is found in the cytoplasm. It carries out the reaction tRNA(Lys) + L-lysine + ATP = L-lysyl-tRNA(Lys) + AMP + diphosphate. In Methanosarcina barkeri (strain Fusaro / DSM 804), this protein is Lysine--tRNA ligase.